We begin with the raw amino-acid sequence, 154 residues long: Myoglobin (154 aa).

Residues 2 to 148 form the Globin domain; the sequence is GLSDGEWQLV…FRNDIAAKYK (147 aa). At Ser4 the chain carries Phosphoserine. His65 is a nitrite binding site. His65 contacts O2. Thr68 carries the phosphothreonine modification. His94 provides a ligand contact to heme b.

Belongs to the globin family. As to quaternary structure, monomeric.

It localises to the cytoplasm. The protein localises to the sarcoplasm. The catalysed reaction is Fe(III)-heme b-[protein] + nitric oxide + H2O = Fe(II)-heme b-[protein] + nitrite + 2 H(+). It carries out the reaction H2O2 + AH2 = A + 2 H2O. Functionally, monomeric heme protein which primary function is to store oxygen and facilitate its diffusion within muscle tissues. Reversibly binds oxygen through a pentacoordinated heme iron and enables its timely and efficient release as needed during periods of heightened demand. Depending on the oxidative conditions of tissues and cells, and in addition to its ability to bind oxygen, it also has a nitrite reductase activity whereby it regulates the production of bioactive nitric oxide. Under stress conditions, like hypoxia and anoxia, it also protects cells against reactive oxygen species thanks to its pseudoperoxidase activity. The protein is Myoglobin (MB) of Spalax ehrenbergi (Middle East blind mole rat).